Here is a 602-residue protein sequence, read N- to C-terminus: Protein nessun dorma (602 aa).

A coiled-coil region spans residues 188 to 208 (AEAKYIQQRLDYLELDLSDAE).

As to quaternary structure, interacts (via N-terminus) with both members of the centralspindlin complex, Pav and Tum. Detected in testis (at protein level). Also expressed in ovary.

The protein resides in the midbody. Functionally, required during male meiosis for completion of spermatocyte cytokinesis and possibly also required in female germline cells. Also involved in ring canal formation in male and female germline cells. Not essential for cleavage furrow ingression but is required for contractile ring stability and the attachment of the furrowing membrane to the actomyosin ring in late telophase. Displays high binding affinity for beta-galactosides. This Drosophila melanogaster (Fruit fly) protein is Protein nessun dorma.